The sequence spans 165 residues: MNLSKTGLPFLWISAVAFFTDLITKLAVVKNFSLYESVNILPFFNLTYVRNHGAAFSFLADHAGWQKYFFILLALAVSFMILFFLYKNQATQKLQNTGYALMIGGALANAADRAYHGFVVDFFDFYWQQWHYPVFNVADIAICIGAGLLAIDAFKQNDKKESKQN.

The next 3 membrane-spanning stretches (helical) occupy residues 9–29 (PFLWISAVAFFTDLITKLAVV), 65–85 (WQKYFFILLALAVSFMILFFL), and 97–119 (TGYALMIGGALANAADRAYHGFV). Active-site residues include D121 and D139. The chain crosses the membrane as a helical span at residues 134-154 (VFNVADIAICIGAGLLAIDAF).

Belongs to the peptidase A8 family.

It localises to the cell inner membrane. The enzyme catalyses Release of signal peptides from bacterial membrane prolipoproteins. Hydrolyzes -Xaa-Yaa-Zaa-|-(S,diacylglyceryl)Cys-, in which Xaa is hydrophobic (preferably Leu), and Yaa (Ala or Ser) and Zaa (Gly or Ala) have small, neutral side chains.. It participates in protein modification; lipoprotein biosynthesis (signal peptide cleavage). Its function is as follows. This protein specifically catalyzes the removal of signal peptides from prolipoproteins. In Histophilus somni (strain 2336) (Haemophilus somnus), this protein is Lipoprotein signal peptidase.